The following is a 1181-amino-acid chain: Lysine-specific demethylase hairless (1181 aa).

A compositionally biased stretch (pro residues) spans 311–323 (TPRCPSPGPPTPP). 3 disordered regions span residues 311–378 (TPRC…HTKL), 413–472 (AGSP…DGRI), and 509–543 (SHSQKSHKLPLEEKPLEEDSCATSEEGGGSSPEAS). The span at 347 to 357 (SPEGSSSGPGE) shows a compositional bias: low complexity. Polar residues predominate over residues 447-461 (TPETSTGSKAEAQQQ). A compositionally biased stretch (basic and acidic residues) spans 462–472 (EEQRGPRDGRI). Residues 560–564 (LCRLL) carry the LXXLL motif 1 motif. The C6-type zinc finger occupies 594 to 619 (CSRCHHGLFNTHWRCSHCSHRLCVAC). The segment at 696–745 (GDGGQQKEPTEKTPPAPQLSCNGDSNRTKDIKEETPDSTESPAEDRAGRS) is disordered. Residues 721 to 730 (NRTKDIKEET) show a composition bias toward basic and acidic residues. An LXXLL motif 2 motif is present at residues 752-756 (LCELL). Residues 938–1149 (DESRVENLAS…LSAQLCHQGA (212 aa)) form the JmjC domain. Residues Cys999, Glu1001, and His1117 each coordinate Fe cation.

Requires Fe(2+) as cofactor.

The protein resides in the nucleus. It carries out the reaction N(6),N(6)-dimethyl-L-lysyl(9)-[histone H3] + 2 2-oxoglutarate + 2 O2 = L-lysyl(9)-[histone H3] + 2 formaldehyde + 2 succinate + 2 CO2. Functionally, histone demethylase that specifically demethylates both mono- and dimethylated 'Lys-9' of histone H3. May act as a transcription regulator controlling hair biology (via targeting of collagens), neural activity, and cell cycle. In Rattus norvegicus (Rat), this protein is Lysine-specific demethylase hairless (Hr).